Consider the following 383-residue polypeptide: Putative glutamate--cysteine ligase 2 (383 aa).

This sequence belongs to the glutamate--cysteine ligase type 2 family. YbdK subfamily.

It catalyses the reaction L-cysteine + L-glutamate + ATP = gamma-L-glutamyl-L-cysteine + ADP + phosphate + H(+). Its function is as follows. ATP-dependent carboxylate-amine ligase which exhibits weak glutamate--cysteine ligase activity. The polypeptide is Putative glutamate--cysteine ligase 2 (Clavibacter michiganensis subsp. michiganensis (strain NCPPB 382)).